A 293-amino-acid chain; its full sequence is tRNA pseudouridine synthase B (293 aa).

The Nucleophile role is filled by aspartate 39.

The protein belongs to the pseudouridine synthase TruB family. Type 1 subfamily.

It carries out the reaction uridine(55) in tRNA = pseudouridine(55) in tRNA. Its function is as follows. Responsible for synthesis of pseudouridine from uracil-55 in the psi GC loop of transfer RNAs. In Streptococcus mutans serotype c (strain ATCC 700610 / UA159), this protein is tRNA pseudouridine synthase B.